The sequence spans 436 residues: Trigger factor (436 aa).

The PPIase FKBP-type domain maps to 163–248 (GDRVTVDFEG…VKKIEAAHLP (86 aa)).

Belongs to the FKBP-type PPIase family. Tig subfamily.

Its subcellular location is the cytoplasm. The enzyme catalyses [protein]-peptidylproline (omega=180) = [protein]-peptidylproline (omega=0). In terms of biological role, involved in protein export. Acts as a chaperone by maintaining the newly synthesized protein in an open conformation. Functions as a peptidyl-prolyl cis-trans isomerase. The chain is Trigger factor from Paracidovorax citrulli (strain AAC00-1) (Acidovorax citrulli).